We begin with the raw amino-acid sequence, 101 residues long: Small ribosomal subunit protein uS14A (101 aa).

The segment at 31 to 69 is disordered; that stretch reads IAAPGSSPEERAAAQQELRRQPRDASATRLRNRDAVDGR. The segment covering 38 to 53 has biased composition (basic and acidic residues); that stretch reads PEERAAAQQELRRQPR.

This sequence belongs to the universal ribosomal protein uS14 family. Part of the 30S ribosomal subunit. Contacts proteins S3 and S10.

Functionally, binds 16S rRNA, required for the assembly of 30S particles and may also be responsible for determining the conformation of the 16S rRNA at the A site. This is Small ribosomal subunit protein uS14A from Saccharopolyspora erythraea (strain ATCC 11635 / DSM 40517 / JCM 4748 / NBRC 13426 / NCIMB 8594 / NRRL 2338).